Reading from the N-terminus, the 614-residue chain is Adenylate kinase 7 (614 aa).

Residues 258–503 form an adenylate kinase region; that stretch reads PIKICILGPP…KEIGKPRNYG (246 aa). 268–273 is an ATP binding site; sequence AVGKSS. An NMP region spans residues 288–346; the sequence is KMKDVIAEAIAKLEAIVAPKDSVEGEEEGEEEEEEENVDDAQELLDGIKESMEQNAGRL. The tract at residues 308-327 is disordered; sequence DSVEGEEEGEEEEEEENVDD. Positions 311-327 are enriched in acidic residues; it reads EGEEEGEEEEEEENVDD. AMP-binding positions include 323–346, 373–376, and Gln380; these read ENVDDAQELLDGIKESMEQNAGRL and GFPK. Positions 376–568 form a coiled coil; the sequence is KTYDQAKDLF…EERELLEVQS (193 aa). Residues 428–438 form an LID region; that stretch reads NLPESVVAGTH. Arg446 contacts AMP. Gly478 is an ATP binding site. A DPY-30 region spans residues 570–614; sequence PLRNYLMTYVMPTLMQGLNECCKVRPEDPVDFLAEYLFKNNPEMQ.

This sequence in the central section; belongs to the adenylate kinase family. The protein in the C-terminal section; belongs to the dpy-30 family.

The protein localises to the cytoplasm. It localises to the cytosol. Its subcellular location is the cell projection. The protein resides in the cilium. It is found in the flagellum. It catalyses the reaction AMP + ATP = 2 ADP. The enzyme catalyses a 2'-deoxyribonucleoside 5'-diphosphate + ATP = a 2'-deoxyribonucleoside 5'-triphosphate + ADP. The catalysed reaction is a ribonucleoside 5'-diphosphate + ATP = a ribonucleoside 5'-triphosphate + ADP. Functionally, nucleoside monophosphate (NMP) kinase that catalyzes the reversible transfer of the terminal phosphate group between nucleoside triphosphates and monophosphates. Has highest activity toward AMP, and weaker activity toward dAMP, CMP and dCMP. Also displays broad nucleoside diphosphate kinase activity. Involved in maintaining ciliary structure and function. The chain is Adenylate kinase 7 (Ak7) from Mus musculus (Mouse).